A 244-amino-acid chain; its full sequence is Phosphonates import ATP-binding protein PhnC 2 (244 aa).

In terms of domain architecture, ABC transporter spans 3–242; it reads LRVEGLKKVY…ELTDYTVDQL (240 aa). Residue 36–43 participates in ATP binding; the sequence is GPSGAGKS.

Belongs to the ABC transporter superfamily. Phosphonates importer (TC 3.A.1.9.1) family. As to quaternary structure, the complex is composed of two ATP-binding proteins (PhnC), two transmembrane proteins (PhnE) and a solute-binding protein (PhnD).

The protein localises to the cell membrane. It carries out the reaction phosphonate(out) + ATP + H2O = phosphonate(in) + ADP + phosphate + H(+). Part of the ABC transporter complex PhnCDE involved in phosphonates import. Responsible for energy coupling to the transport system. The sequence is that of Phosphonates import ATP-binding protein PhnC 2 from Halalkalibacterium halodurans (strain ATCC BAA-125 / DSM 18197 / FERM 7344 / JCM 9153 / C-125) (Bacillus halodurans).